The chain runs to 328 residues: Biotin synthase (328 aa).

A Radical SAM core domain is found at 42–267 (YHVQLASLLS…LMPGSRVRLS (226 aa)). Residues Cys57, Cys61, and Cys64 each coordinate [4Fe-4S] cluster. Positions 101, 133, 193, and 265 each coordinate [2Fe-2S] cluster.

Belongs to the radical SAM superfamily. Biotin synthase family. Homodimer. Requires [4Fe-4S] cluster as cofactor. The cofactor is [2Fe-2S] cluster.

It carries out the reaction (4R,5S)-dethiobiotin + (sulfur carrier)-SH + 2 reduced [2Fe-2S]-[ferredoxin] + 2 S-adenosyl-L-methionine = (sulfur carrier)-H + biotin + 2 5'-deoxyadenosine + 2 L-methionine + 2 oxidized [2Fe-2S]-[ferredoxin]. Its pathway is cofactor biosynthesis; biotin biosynthesis; biotin from 7,8-diaminononanoate: step 2/2. Catalyzes the conversion of dethiobiotin (DTB) to biotin by the insertion of a sulfur atom into dethiobiotin via a radical-based mechanism. The polypeptide is Biotin synthase (Synechococcus sp. (strain CC9311)).